A 272-amino-acid polypeptide reads, in one-letter code: Indole-3-glycerol phosphate synthase (272 aa).

It belongs to the TrpC family.

It catalyses the reaction 1-(2-carboxyphenylamino)-1-deoxy-D-ribulose 5-phosphate + H(+) = (1S,2R)-1-C-(indol-3-yl)glycerol 3-phosphate + CO2 + H2O. It functions in the pathway amino-acid biosynthesis; L-tryptophan biosynthesis; L-tryptophan from chorismate: step 4/5. This chain is Indole-3-glycerol phosphate synthase, found in Mycobacterium sp. (strain JLS).